A 536-amino-acid polypeptide reads, in one-letter code: CTP synthase (536 aa).

Residues 1–267 (MTKFIFVTGG…DDIVIKRLQL (267 aa)) form an amidoligase domain region. Position 13 (Ser-13) interacts with CTP. Ser-13 contacts UTP. 14–19 (SLGKGI) contacts ATP. An L-glutamine-binding site is contributed by Tyr-54. Asp-71 contributes to the ATP binding site. Residues Asp-71 and Glu-141 each coordinate Mg(2+). CTP is bound by residues 148–150 (DIE), 188–193 (KTKPTQ), and Lys-224. Residues 188 to 193 (KTKPTQ) and Lys-224 each bind UTP. Residue 240-242 (RDA) coordinates ATP. The region spanning 293 to 535 (TIGLVGKYVS…IEASLKYQQN (243 aa)) is the Glutamine amidotransferase type-1 domain. Gly-355 contributes to the L-glutamine binding site. The Nucleophile; for glutamine hydrolysis role is filled by Cys-382. Residues 383–386 (LGMQ), Glu-406, and Arg-463 each bind L-glutamine. Catalysis depends on residues His-508 and Glu-510.

This sequence belongs to the CTP synthase family. In terms of assembly, homotetramer.

It carries out the reaction UTP + L-glutamine + ATP + H2O = CTP + L-glutamate + ADP + phosphate + 2 H(+). It catalyses the reaction L-glutamine + H2O = L-glutamate + NH4(+). The catalysed reaction is UTP + NH4(+) + ATP = CTP + ADP + phosphate + 2 H(+). Its pathway is pyrimidine metabolism; CTP biosynthesis via de novo pathway; CTP from UDP: step 2/2. Allosterically activated by GTP, when glutamine is the substrate; GTP has no effect on the reaction when ammonia is the substrate. The allosteric effector GTP functions by stabilizing the protein conformation that binds the tetrahedral intermediate(s) formed during glutamine hydrolysis. Inhibited by the product CTP, via allosteric rather than competitive inhibition. In terms of biological role, catalyzes the ATP-dependent amination of UTP to CTP with either L-glutamine or ammonia as the source of nitrogen. Regulates intracellular CTP levels through interactions with the four ribonucleotide triphosphates. The chain is CTP synthase from Staphylococcus aureus (strain COL).